A 49-amino-acid polypeptide reads, in one-letter code: uncharacterized protein (49 aa).

A helical membrane pass occupies residues 31–48 (PDLYTIIVSYFSIFSLFF).

The protein resides in the membrane. This is an uncharacterized protein from Saccharomyces cerevisiae (strain ATCC 204508 / S288c) (Baker's yeast).